The following is a 207-amino-acid chain: Urease accessory protein UreG (207 aa).

GTP is bound at residue 14-21; that stretch reads GPVGSGKT.

The protein belongs to the SIMIBI class G3E GTPase family. UreG subfamily. Homodimer. UreD, UreF and UreG form a complex that acts as a GTP-hydrolysis-dependent molecular chaperone, activating the urease apoprotein by helping to assemble the nickel containing metallocenter of UreC. The UreE protein probably delivers the nickel.

The protein localises to the cytoplasm. Its function is as follows. Facilitates the functional incorporation of the urease nickel metallocenter. This process requires GTP hydrolysis, probably effectuated by UreG. This is Urease accessory protein UreG from Tolumonas auensis (strain DSM 9187 / NBRC 110442 / TA 4).